The following is a 93-amino-acid chain: Ubiquinol-cytochrome-c reductase complex assembly factor 3 (93 aa).

The Mitochondrial matrix portion of the chain corresponds to 1–7 (MDSLRKM). A helical transmembrane segment spans residues 8–28 (LISVAMLGAGAGVGYALLVIV). Residues 23-80 (ALLVIVTPGERRKQEMLKEMPLQDPRSREEAARTQQLLLATLQEAATTQENVAWRKNW) are mediates lipid-binding. The Mitochondrial intermembrane segment spans residues 29 to 93 (TPGERRKQEM…GEGGAGGRSP (65 aa)).

The protein belongs to the UQCC3 family. Associates with the ubiquinol-cytochrome c reductase complex (mitochondrial respiratory chain complex III or cytochrome b-c1 complex). Interacts with UQCC1. Forms a complex, named COMC, composed of UQCC1, UQCC2; UQCC3 and UQCC4; mediates MT-CYB hemylation and association with the first nuclear-encoded complex III subunit UQCRQ. Probably cleaved by OMA1 under mitochondrial stress conditions.

Its subcellular location is the mitochondrion inner membrane. Required for the assembly of the ubiquinol-cytochrome c reductase complex (mitochondrial respiratory chain complex III or cytochrome b-c1 complex), mediating cytochrome b recruitment and probably stabilization within the complex. Thereby, plays an important role in ATP production by mitochondria. Cardiolipin-binding protein, it may also control the cardiolipin composition of mitochondria membranes and their morphology. The polypeptide is Ubiquinol-cytochrome-c reductase complex assembly factor 3 (Homo sapiens (Human)).